The sequence spans 508 residues: Photosystem II CP47 reaction center protein (508 aa).

Helical transmembrane passes span serine 21 to serine 36, isoleucine 101 to tryptophan 115, glycine 140 to phenylalanine 156, isoleucine 203 to serine 218, valine 237 to valine 252, and threonine 457 to arginine 472.

This sequence belongs to the PsbB/PsbC family. PsbB subfamily. PSII is composed of 1 copy each of membrane proteins PsbA, PsbB, PsbC, PsbD, PsbE, PsbF, PsbH, PsbI, PsbJ, PsbK, PsbL, PsbM, PsbT, PsbX, PsbY, PsbZ, Psb30/Ycf12, at least 3 peripheral proteins of the oxygen-evolving complex and a large number of cofactors. It forms dimeric complexes. Binds multiple chlorophylls. PSII binds additional chlorophylls, carotenoids and specific lipids. serves as cofactor.

It is found in the plastid. The protein localises to the chloroplast thylakoid membrane. Functionally, one of the components of the core complex of photosystem II (PSII). It binds chlorophyll and helps catalyze the primary light-induced photochemical processes of PSII. PSII is a light-driven water:plastoquinone oxidoreductase, using light energy to abstract electrons from H(2)O, generating O(2) and a proton gradient subsequently used for ATP formation. The polypeptide is Photosystem II CP47 reaction center protein (Pinus koraiensis (Korean pine)).